Here is a 450-residue protein sequence, read N- to C-terminus: Bifunctional protein GlmU (450 aa).

Residues 1-236 (MTAHKPFSAV…AWEVSGVNNR (236 aa)) are pyrophosphorylase. Residues 12–15 (LAAG), Lys26, Gln79, 84–85 (GT), 107–109 (YGD), Gly147, Glu162, Asn177, and Asn234 each bind UDP-N-acetyl-alpha-D-glucosamine. Asp109 is a Mg(2+) binding site. Residue Asn234 participates in Mg(2+) binding. A linker region spans residues 237–257 (AELASLESLWQNRKRQDVMKD). The interval 258–450 (GASLIAPETV…KKFRQRKKKK (193 aa)) is N-acetyltransferase. UDP-N-acetyl-alpha-D-glucosamine is bound by residues Arg323 and Lys341. Residue His353 is the Proton acceptor of the active site. UDP-N-acetyl-alpha-D-glucosamine is bound by residues Tyr356 and Asn367. Acetyl-CoA contacts are provided by residues 376 to 377 (NY), Ser395, Ala413, and Arg430.

The protein in the N-terminal section; belongs to the N-acetylglucosamine-1-phosphate uridyltransferase family. This sequence in the C-terminal section; belongs to the transferase hexapeptide repeat family. As to quaternary structure, homotrimer. Mg(2+) serves as cofactor.

It is found in the cytoplasm. It catalyses the reaction alpha-D-glucosamine 1-phosphate + acetyl-CoA = N-acetyl-alpha-D-glucosamine 1-phosphate + CoA + H(+). The enzyme catalyses N-acetyl-alpha-D-glucosamine 1-phosphate + UTP + H(+) = UDP-N-acetyl-alpha-D-glucosamine + diphosphate. It participates in nucleotide-sugar biosynthesis; UDP-N-acetyl-alpha-D-glucosamine biosynthesis; N-acetyl-alpha-D-glucosamine 1-phosphate from alpha-D-glucosamine 6-phosphate (route II): step 2/2. Its pathway is nucleotide-sugar biosynthesis; UDP-N-acetyl-alpha-D-glucosamine biosynthesis; UDP-N-acetyl-alpha-D-glucosamine from N-acetyl-alpha-D-glucosamine 1-phosphate: step 1/1. The protein operates within bacterial outer membrane biogenesis; LPS lipid A biosynthesis. Functionally, catalyzes the last two sequential reactions in the de novo biosynthetic pathway for UDP-N-acetylglucosamine (UDP-GlcNAc). The C-terminal domain catalyzes the transfer of acetyl group from acetyl coenzyme A to glucosamine-1-phosphate (GlcN-1-P) to produce N-acetylglucosamine-1-phosphate (GlcNAc-1-P), which is converted into UDP-GlcNAc by the transfer of uridine 5-monophosphate (from uridine 5-triphosphate), a reaction catalyzed by the N-terminal domain. The sequence is that of Bifunctional protein GlmU from Zymomonas mobilis subsp. mobilis (strain ATCC 31821 / ZM4 / CP4).